Reading from the N-terminus, the 207-residue chain is Protein YABBY 6 (207 aa).

The C4-type zinc finger occupies 16–43 (CNFCNTILAVSVPGNSMLNIVTVRCGHC).

It belongs to the YABBY family. Expressed in leaf blades, leaf sheaths and flowers.

Its subcellular location is the nucleus. The sequence is that of Protein YABBY 6 (YAB6) from Oryza sativa subsp. japonica (Rice).